A 323-amino-acid chain; its full sequence is PTS system mannose-specific EIIAB component (323 aa).

A PTS EIIA type-4 domain is found at 2–124 (TIAIVIGTHG…VALAVETGRE (123 aa)). The Tele-phosphohistidine intermediate; for EIIA activity role is filled by histidine 10. Phosphohistidine; by HPr is present on histidine 10. Lysine 55 carries the post-translational modification N6-acetyllysine. The tract at residues 137–155 (AAPAPAAAAPKAAPTPAKP) is hinge. The PTS EIIB type-4 domain occupies 157-320 (GPNDYMVIGL…KLKMMDLISK (164 aa)). The Pros-phosphohistidine intermediate; for EIIB activity role is filled by histidine 175. Position 175 is a phosphohistidine; by EIIA (histidine 175). Lysine 234 is subject to N6-acetyllysine.

Homodimer.

The protein localises to the cytoplasm. It is found in the cell inner membrane. The catalysed reaction is D-mannose(out) + N(pros)-phospho-L-histidyl-[protein] = D-mannose 6-phosphate(in) + L-histidyl-[protein]. Its function is as follows. The phosphoenolpyruvate-dependent sugar phosphotransferase system (sugar PTS), a major carbohydrate active transport system, catalyzes the phosphorylation of incoming sugar substrates concomitantly with their translocation across the cell membrane. The enzyme II ManXYZ PTS system is involved in mannose transport. This is PTS system mannose-specific EIIAB component (manX) from Escherichia coli O157:H7.